The following is a 79-amino-acid chain: uncharacterized protein (79 aa).

The segment at 1–37 is disordered; the sequence is MQLDVFSRMMFGDAAKPTEEKEEEQQEEVSQVSQTND.

This is an uncharacterized protein from Bacillus subtilis (strain 168).